A 644-amino-acid polypeptide reads, in one-letter code: Threonine--tRNA ligase (644 aa).

Positions 3 to 64 (EMIRITFPDG…QEDGSISIIT (62 aa)) constitute a TGS domain. A catalytic region spans residues 245–542 (DHRKLGKELE…LIEEYKGAFP (298 aa)). Zn(2+)-binding residues include Cys338, His389, and His519.

This sequence belongs to the class-II aminoacyl-tRNA synthetase family. As to quaternary structure, homodimer. It depends on Zn(2+) as a cofactor.

It localises to the cytoplasm. It catalyses the reaction tRNA(Thr) + L-threonine + ATP = L-threonyl-tRNA(Thr) + AMP + diphosphate + H(+). Its function is as follows. Catalyzes the attachment of threonine to tRNA(Thr) in a two-step reaction: L-threonine is first activated by ATP to form Thr-AMP and then transferred to the acceptor end of tRNA(Thr). Also edits incorrectly charged L-seryl-tRNA(Thr). This chain is Threonine--tRNA ligase, found in Geobacillus sp. (strain WCH70).